A 91-amino-acid chain; its full sequence is Elongation factor 1-beta (91 aa).

This sequence belongs to the EF-1-beta/EF-1-delta family.

Promotes the exchange of GDP for GTP in EF-1-alpha/GDP, thus allowing the regeneration of EF-1-alpha/GTP that could then be used to form the ternary complex EF-1-alpha/GTP/AAtRNA. In Thermococcus gammatolerans (strain DSM 15229 / JCM 11827 / EJ3), this protein is Elongation factor 1-beta.